The sequence spans 188 residues: Pyridoxal 5'-phosphate synthase subunit PdxT (188 aa).

Residue 47 to 49 coordinates L-glutamine; sequence GES. C79 serves as the catalytic Nucleophile. L-glutamine is bound by residues R105 and 134–135; that span reads IR. Residues H170 and E172 each act as charge relay system in the active site.

The protein belongs to the glutaminase PdxT/SNO family. In the presence of PdxS, forms a dodecamer of heterodimers. Only shows activity in the heterodimer.

It catalyses the reaction aldehydo-D-ribose 5-phosphate + D-glyceraldehyde 3-phosphate + L-glutamine = pyridoxal 5'-phosphate + L-glutamate + phosphate + 3 H2O + H(+). It carries out the reaction L-glutamine + H2O = L-glutamate + NH4(+). The protein operates within cofactor biosynthesis; pyridoxal 5'-phosphate biosynthesis. Functionally, catalyzes the hydrolysis of glutamine to glutamate and ammonia as part of the biosynthesis of pyridoxal 5'-phosphate. The resulting ammonia molecule is channeled to the active site of PdxS. The chain is Pyridoxal 5'-phosphate synthase subunit PdxT from Listeria welshimeri serovar 6b (strain ATCC 35897 / DSM 20650 / CCUG 15529 / CIP 8149 / NCTC 11857 / SLCC 5334 / V8).